A 101-amino-acid polypeptide reads, in one-letter code: Urease subunit beta (101 aa).

The protein belongs to the urease beta subunit family. Heterotrimer of UreA (gamma), UreB (beta) and UreC (alpha) subunits. Three heterotrimers associate to form the active enzyme.

The protein resides in the cytoplasm. The enzyme catalyses urea + 2 H2O + H(+) = hydrogencarbonate + 2 NH4(+). It participates in nitrogen metabolism; urea degradation; CO(2) and NH(3) from urea (urease route): step 1/1. This Rhizobium johnstonii (strain DSM 114642 / LMG 32736 / 3841) (Rhizobium leguminosarum bv. viciae) protein is Urease subunit beta.